Here is a 457-residue protein sequence, read N- to C-terminus: Argininosuccinate lyase (457 aa).

This sequence belongs to the lyase 1 family. Argininosuccinate lyase subfamily.

Its subcellular location is the cytoplasm. It carries out the reaction 2-(N(omega)-L-arginino)succinate = fumarate + L-arginine. Its pathway is amino-acid biosynthesis; L-arginine biosynthesis; L-arginine from L-ornithine and carbamoyl phosphate: step 3/3. The chain is Argininosuccinate lyase from Bacillus pumilus (strain SAFR-032).